A 245-amino-acid chain; its full sequence is Probable transcriptional regulatory protein APH_0480 (245 aa).

This sequence belongs to the TACO1 family.

The protein resides in the cytoplasm. This chain is Probable transcriptional regulatory protein APH_0480, found in Anaplasma phagocytophilum (strain HZ).